Consider the following 479-residue polypeptide: Small ribosomal subunit protein bS1 (479 aa).

4 consecutive S1 motif domains span residues 36–105 (GDIV…LSKK), 123–188 (DEAV…LSRR), 209–277 (GAIR…LSLK), and 294–363 (GQIV…LSLK). Positions 429-466 (TAQMEKFAAAEAEAANAPVSNGSSRSEESSGGTLASDA) are disordered. Over residues 437-460 (AAEAEAANAPVSNGSSRSEESSGG) the composition is skewed to low complexity.

The protein belongs to the bacterial ribosomal protein bS1 family. Binds uncharacterized protein MSMEG_2731/MSMEI_2664.

In terms of biological role, binds mRNA, facilitating recognition of most mRNAs by the 30S ribosomal subunit during translation initiation. Plays a role in trans-translation; binds tmRNA (the product of the ssrA gene). Binds very poorly to pyrazinoic acid (POA), the active form of the prodrug pyrazinamide (PZA); POA does not disrupt trans-translation in this organism. M.smegmatis is resistant to the antibiotic PZA. In trans-translation Ala-aminoacylated transfer-messenger RNA (tmRNA, product of the ssrA gene; the 2 termini fold to resemble tRNA(Ala) while it encodes a short internal open reading frame (the tag peptide)) acts like a tRNA, entering the A-site of the ribosome and displacing the stalled mRNA (which is subsequently degraded). The ribosome then switches to translate the ORF on the tmRNA, the nascent peptide is terminated with the 'tag peptide' encoded by the tmRNA and thus targeted for degradation. This is Small ribosomal subunit protein bS1 (rpsA) from Mycolicibacterium smegmatis (strain ATCC 700084 / mc(2)155) (Mycobacterium smegmatis).